Reading from the N-terminus, the 265-residue chain is Urease accessory protein UreH (265 aa).

It belongs to the UreD family. UreH, UreF and UreG form a complex that acts as a GTP-hydrolysis-dependent molecular chaperone, activating the urease apoprotein by helping to assemble the nickel containing metallocenter of UreC. The UreE protein probably delivers the nickel.

It localises to the cytoplasm. In terms of biological role, required for maturation of urease via the functional incorporation of the urease nickel metallocenter. The sequence is that of Urease accessory protein UreH from Helicobacter pylori (strain HPAG1).